The chain runs to 219 residues: MFKKIIILFLGIFLLSSCTDNFRNYFQRSANNKLLDIKGAKGGKRKPVYNNKYIDLAKKNILEDNIDDDDNDSDANYDSDSLLIGEKIDNIKKNREMYINMIKRDIARQKAESNATQSNNDMTLSKANKKVRKDDSYKEKKIEEELNQIKAMLRETKRDITKYTCPNATVNQNYVPPVTNYENENYPPIKNSRPYNNTSKVKQKFIREDDDNTSNACSI.

An N-terminal signal peptide occupies residues methionine 1–serine 17. Residue cysteine 18 is the site of N-palmitoyl cysteine attachment. A lipid anchor (S-diacylglycerol cysteine) is attached at cysteine 18. The disordered stretch occupies residues lysine 110–serine 136. Residues glutamate 112–lysine 126 show a composition bias toward polar residues. Residues tyrosine 137–cysteine 165 adopt a coiled-coil conformation.

It localises to the cell membrane. This is an uncharacterized protein from Rickettsia prowazekii (strain Madrid E).